The sequence spans 230 residues: ATP synthase subunit a (230 aa).

The next 5 membrane-spanning stretches (helical) occupy residues 17 to 37 (LPIT…FIMA), 78 to 98 (IFPF…IGVI), 107 to 127 (DLSV…WFGI), 165 to 187 (LFGN…GFLV), and 198 to 218 (EAII…AGGI).

The protein belongs to the ATPase A chain family. F-type ATPases have 2 components, CF(1) - the catalytic core - and CF(0) - the membrane proton channel. CF(1) has five subunits: alpha(3), beta(3), gamma(1), delta(1), epsilon(1). CF(0) has three main subunits: a(1), b(2) and c(9-12). The alpha and beta chains form an alternating ring which encloses part of the gamma chain. CF(1) is attached to CF(0) by a central stalk formed by the gamma and epsilon chains, while a peripheral stalk is formed by the delta and b chains.

It localises to the cell inner membrane. Key component of the proton channel; it plays a direct role in the translocation of protons across the membrane. The polypeptide is ATP synthase subunit a (Legionella pneumophila (strain Corby)).